Here is a 475-residue protein sequence, read N- to C-terminus: F-box protein SKIP22 (475 aa).

The segment at 114-133 is disordered; that stretch reads DQAKSNPNTSVEDPEGDISG. The 47-residue stretch at 319–365 folds into the F-box domain; sequence PPCLMRLPTELKLKILELLPGVSIGNMACVCTEMRYLASDNDLWKQK.

Part of a SCF (ASK-cullin-F-box) protein ligase complex. Interacts with SKP1A/ASK1 and SPK1B/ASK2.

It localises to the nucleus. It functions in the pathway protein modification; protein ubiquitination. Its function is as follows. Component of SCF(ASK-cullin-F-box) E3 ubiquitin ligase complexes, which may mediate the ubiquitination and subsequent proteasomal degradation of target proteins. The chain is F-box protein SKIP22 (SKIP22) from Arabidopsis thaliana (Mouse-ear cress).